Reading from the N-terminus, the 396-residue chain is MAETQVRNFNINFGPQHPAAHGVLRLVLELDGEVVERVDPHIGLLHRGTEKLMEAKTYLQAVPYLDRLDYVAPMNQEHAYALAVERLLDIEVPKRGQLIRVLYSEIGRILNHLLNVTTQAMDVGALTPPLWGFEEREKLMVFYERACGARMHAAYFRPGGVHQDLPDQLIEDIGKWIDPFFTTLKNLDDLITPNRIFKQRNVDIGVVKLEDAWAWGFSGVMVRGSGAAWDLRKSQPYECYSEMEFDIPVGKNGDCYDRYLIRMEEMRQSARIMRQCVDLLLGKERVGPVSNTDHKIVPPKRGEMKCSMEALIHHFKLYTEGYHVPAGEVYAAVEAPKGEFGVYLVSDGSNKPYRCKLRAPGFAHLQAMDFLCRGHMLADVSAILGSLDIVFGEVDR.

Belongs to the complex I 49 kDa subunit family. As to quaternary structure, NDH-1 is composed of 14 different subunits. Subunits NuoB, C, D, E, F, and G constitute the peripheral sector of the complex.

It is found in the cell inner membrane. The enzyme catalyses a quinone + NADH + 5 H(+)(in) = a quinol + NAD(+) + 4 H(+)(out). Functionally, NDH-1 shuttles electrons from NADH, via FMN and iron-sulfur (Fe-S) centers, to quinones in the respiratory chain. The immediate electron acceptor for the enzyme in this species is believed to be ubiquinone. Couples the redox reaction to proton translocation (for every two electrons transferred, four hydrogen ions are translocated across the cytoplasmic membrane), and thus conserves the redox energy in a proton gradient. The sequence is that of NADH-quinone oxidoreductase subunit D from Brucella suis biovar 1 (strain 1330).